We begin with the raw amino-acid sequence, 1390 residues long: DNA-directed RNA polymerase subunit beta'' (1390 aa).

Zn(2+) contacts are provided by Cys224, Cys294, Cys301, and Cys304.

This sequence belongs to the RNA polymerase beta' chain family. RpoC2 subfamily. In terms of assembly, in plastids the minimal PEP RNA polymerase catalytic core is composed of four subunits: alpha, beta, beta', and beta''. When a (nuclear-encoded) sigma factor is associated with the core the holoenzyme is formed, which can initiate transcription. The cofactor is Zn(2+).

Its subcellular location is the plastid. It is found in the chloroplast. It catalyses the reaction RNA(n) + a ribonucleoside 5'-triphosphate = RNA(n+1) + diphosphate. DNA-dependent RNA polymerase catalyzes the transcription of DNA into RNA using the four ribonucleoside triphosphates as substrates. The polypeptide is DNA-directed RNA polymerase subunit beta'' (Ceratophyllum demersum (Rigid hornwort)).